Consider the following 219-residue polypeptide: 2-hydroxy-3-keto-5-methylthiopentenyl-1-phosphate phosphatase (219 aa).

It belongs to the HAD-like hydrolase superfamily. MtnX family.

It catalyses the reaction 2-hydroxy-5-methylsulfanyl-3-oxopent-1-enyl phosphate + H2O = 1,2-dihydroxy-5-(methylsulfanyl)pent-1-en-3-one + phosphate. Its pathway is amino-acid biosynthesis; L-methionine biosynthesis via salvage pathway; L-methionine from S-methyl-5-thio-alpha-D-ribose 1-phosphate: step 4/6. Functionally, dephosphorylates 2-hydroxy-3-keto-5-methylthiopentenyl-1-phosphate (HK-MTPenyl-1-P) yielding 1,2-dihydroxy-3-keto-5-methylthiopentene (DHK-MTPene). This is 2-hydroxy-3-keto-5-methylthiopentenyl-1-phosphate phosphatase from Bacillus thuringiensis subsp. konkukian (strain 97-27).